Consider the following 141-residue polypeptide: Large ribosomal subunit protein uL11 (141 aa).

It belongs to the universal ribosomal protein uL11 family. In terms of assembly, part of the ribosomal stalk of the 50S ribosomal subunit. Interacts with L10 and the large rRNA to form the base of the stalk. L10 forms an elongated spine to which L12 dimers bind in a sequential fashion forming a multimeric L10(L12)X complex. One or more lysine residues are methylated.

Forms part of the ribosomal stalk which helps the ribosome interact with GTP-bound translation factors. The sequence is that of Large ribosomal subunit protein uL11 from Nostoc sp. (strain PCC 7120 / SAG 25.82 / UTEX 2576).